Reading from the N-terminus, the 103-residue chain is Large ribosomal subunit protein bL21 (103 aa).

Belongs to the bacterial ribosomal protein bL21 family. Part of the 50S ribosomal subunit. Contacts protein L20.

In terms of biological role, this protein binds to 23S rRNA in the presence of protein L20. The polypeptide is Large ribosomal subunit protein bL21 (Acidithiobacillus ferrooxidans (strain ATCC 23270 / DSM 14882 / CIP 104768 / NCIMB 8455) (Ferrobacillus ferrooxidans (strain ATCC 23270))).